Here is a 369-residue protein sequence, read N- to C-terminus: CASP-like protein 4U1 (369 aa).

The tract at residues 1 to 162 (MASTPRTPAP…RAETKLPLSS (162 aa)) is disordered. Residues 1 to 222 (MASTPRTPAP…AVAAVAERRE (222 aa)) lie on the Cytoplasmic side of the membrane. Pro residues predominate over residues 7–23 (TPAPERSPPPVPTPPPP). Residues 36-51 (SPREEASFSSDGREGA) are compositionally biased toward basic and acidic residues. Composition is skewed to low complexity over residues 87-96 (ANKAAAATAE) and 114-127 (SSQT…SPTP). A helical membrane pass occupies residues 223–243 (LLLALRLATAVLSLAAFSVIA). The Extracellular portion of the chain corresponds to 244-262 (SARTSGWAGDYYARHLQYR). The helical transmembrane segment at 263–283 (YAVAVNVIVFAYSVAQSLGKI) threads the bilayer. Residues 284 to 300 (RHLVSPRFTFRTMSSYY) lie on the Cytoplasmic side of the membrane. The chain crosses the membrane as a helical span at residues 301 to 321 (CSLFLDQVLAYLLMSASSAAA). Topologically, residues 322-339 (SRNDLWVSRFGTDAFVRK) are extracellular. A helical transmembrane segment spans residues 340 to 360 (ITGALWLSFVAFLVLALNAVI). Topologically, residues 361-369 (SXANLFSMV) are cytoplasmic.

It belongs to the Casparian strip membrane proteins (CASP) family. As to quaternary structure, homodimer and heterodimers.

Its subcellular location is the cell membrane. This is CASP-like protein 4U1 from Zea mays (Maize).